Reading from the N-terminus, the 238-residue chain is Ankyrin repeat domain-containing protein 49 (238 aa).

Serine 48 bears the Phosphoserine mark. ANK repeat units follow at residues 77–105 (LLWAAEKNRLTTVQRLLSERATHVNTRDE), 106–135 (DKYTPLHRAAYNGHLDVVRELIAHGADVHA), 139–168 (DGWTPLHSACKWNNARVASFLLQHDADVNA), and 172–205 (GLLTPLHLAAGNRDSKDTLELLLMNRYIKPGLKN).

It localises to the nucleus. Its function is as follows. May have a role in spermatogenesis where it promotes autophagy in response to serum starvation, via the NF-kappaB pathway. This is Ankyrin repeat domain-containing protein 49 (ANKRD49) from Bos taurus (Bovine).